Reading from the N-terminus, the 428-residue chain is Cytochrome bc complex cytochrome b subunit (428 aa).

2 stretches are compositionally biased toward low complexity: residues 1–15 (MAEN…TAPA) and 21–52 (APGA…AAAP). Residues 1–72 (MAENTPKPAA…RPDPNPFKDS (72 aa)) are disordered. Residues 59 to 72 (PPVDRPDPNPFKDS) show a composition bias toward basic and acidic residues. A helical membrane pass occupies residues 110 to 130 (YFGGLGLFFFVIQILTGLLLL). H161 and H175 together coordinate heme b. 6 helical membrane passes run 162 to 182 (AWSA…TFFM), 193 to 213 (WVSG…GYLL), 260 to 280 (LHVV…LTLV), 312 to 331 (GIGW…MFPW), 369 to 389 (ELLA…VPFI), and 401 to 421 (IFTI…YRVY). Positions 261 and 276 each coordinate heme b.

This sequence belongs to the cytochrome b family. Heme b serves as cofactor.

The protein resides in the cell inner membrane. Functionally, component of the green S-bacteria bc complex, which consists of the Rieske protein and cytochrome b subunit but appears to lack a cytochrome c1-equivalent. This complex has a comparatively low redox potential. This chain is Cytochrome bc complex cytochrome b subunit (petB), found in Chlorobaculum thiosulfatiphilum (Chlorobium limicola f.sp. thiosulfatophilum).